The chain runs to 149 residues: Peptide deformylase (149 aa).

Fe cation-binding residues include C92 and H134. E135 is a catalytic residue. H138 serves as a coordination point for Fe cation.

The protein belongs to the polypeptide deformylase family. Fe(2+) is required as a cofactor.

The enzyme catalyses N-terminal N-formyl-L-methionyl-[peptide] + H2O = N-terminal L-methionyl-[peptide] + formate. Functionally, removes the formyl group from the N-terminal Met of newly synthesized proteins. Requires at least a dipeptide for an efficient rate of reaction. N-terminal L-methionine is a prerequisite for activity but the enzyme has broad specificity at other positions. This is Peptide deformylase from Buchnera aphidicola subsp. Cinara cedri (strain Cc).